A 114-amino-acid chain; its full sequence is Fumarate reductase subunit D (114 aa).

Transmembrane regions (helical) follow at residues 25 to 45, 50 to 70, and 94 to 114; these read SGLA…FGII, IIAF…TIFP, and LIFY…VIAI.

It belongs to the FrdD family. As to quaternary structure, part of an enzyme complex containing four subunits: a flavoprotein (FrdA), an iron-sulfur protein (FrdB), and two hydrophobic anchor proteins (FrdC and FrdD).

The protein localises to the cell inner membrane. Anchors the catalytic components of the fumarate reductase complex to the cell membrane, binds quinones. This is Fumarate reductase subunit D from Mannheimia succiniciproducens (strain KCTC 0769BP / MBEL55E).